The primary structure comprises 484 residues: ATP synthase subunit beta (484 aa).

162-169 (GGAGVGKT) provides a ligand contact to ATP.

Belongs to the ATPase alpha/beta chains family. F-type ATPases have 2 components, CF(1) - the catalytic core - and CF(0) - the membrane proton channel. CF(1) has five subunits: alpha(3), beta(3), gamma(1), delta(1), epsilon(1). CF(0) has four main subunits: a(1), b(1), b'(1) and c(9-12).

It is found in the cellular thylakoid membrane. It catalyses the reaction ATP + H2O + 4 H(+)(in) = ADP + phosphate + 5 H(+)(out). Its function is as follows. Produces ATP from ADP in the presence of a proton gradient across the membrane. The catalytic sites are hosted primarily by the beta subunits. This chain is ATP synthase subunit beta, found in Trichodesmium erythraeum (strain IMS101).